A 201-amino-acid polypeptide reads, in one-letter code: Cysteine dioxygenase type 1 (201 aa).

Residues H86, H88, and H141 each coordinate Fe cation. Positions 93-158 form a cross-link, 3'-(S-cysteinyl)-tyrosine (Cys-Tyr); it reads CFLKLLQGQL…TEPAVSLHLY (66 aa).

The protein belongs to the cysteine dioxygenase family. In terms of assembly, monomer. The cofactor is Fe cation. It depends on Ni(2+) as a cofactor. Zn(2+) serves as cofactor. The thioether cross-link between Cys-93 and Tyr-158 plays a structural role through stabilizing the Fe(2+) ion, and prevents the production of highly damaging free hydroxyl radicals by holding the oxygen radical via hydroxyl hydrogen.

It catalyses the reaction L-cysteine + O2 = 3-sulfino-L-alanine + H(+). The protein operates within organosulfur biosynthesis; taurine biosynthesis; hypotaurine from L-cysteine: step 1/2. Catalyzes the oxidation of cysteine to cysteine sulfinic acid with addition of molecular dioxygen. The chain is Cysteine dioxygenase type 1 (cdo1) from Danio rerio (Zebrafish).